Here is a 154-residue protein sequence, read N- to C-terminus: Myoglobin (154 aa).

The Globin domain maps to V2–K148. S4 is subject to Phosphoserine. H65 contacts nitrite. H65 contacts O2. Residue T68 is modified to Phosphothreonine. Heme b is bound at residue H94.

This sequence belongs to the globin family. As to quaternary structure, monomeric.

The protein resides in the cytoplasm. The protein localises to the sarcoplasm. It catalyses the reaction Fe(III)-heme b-[protein] + nitric oxide + H2O = Fe(II)-heme b-[protein] + nitrite + 2 H(+). The catalysed reaction is H2O2 + AH2 = A + 2 H2O. Functionally, monomeric heme protein which primary function is to store oxygen and facilitate its diffusion within muscle tissues. Reversibly binds oxygen through a pentacoordinated heme iron and enables its timely and efficient release as needed during periods of heightened demand. Depending on the oxidative conditions of tissues and cells, and in addition to its ability to bind oxygen, it also has a nitrite reductase activity whereby it regulates the production of bioactive nitric oxide. Under stress conditions, like hypoxia and anoxia, it also protects cells against reactive oxygen species thanks to its pseudoperoxidase activity. This chain is Myoglobin (MB), found in Megaptera novaeangliae (Humpback whale).